Reading from the N-terminus, the 468-residue chain is Glutamyl-tRNA reductase (468 aa).

Substrate-binding positions include 49–52, Ser109, 114–116, and Gln120; these read TCNR and EQQ. Catalysis depends on Cys50, which acts as the Nucleophile. NADP(+) is bound at residue 189 to 194; that stretch reads GAGAMG. Residues 443 to 468 form a disordered region; sequence VPSGFDAESRRGGGDMQSSPKRSPSN. Residues 458–468 are compositionally biased toward polar residues; that stretch reads MQSSPKRSPSN.

This sequence belongs to the glutamyl-tRNA reductase family. Homodimer.

It carries out the reaction (S)-4-amino-5-oxopentanoate + tRNA(Glu) + NADP(+) = L-glutamyl-tRNA(Glu) + NADPH + H(+). It functions in the pathway porphyrin-containing compound metabolism; protoporphyrin-IX biosynthesis; 5-aminolevulinate from L-glutamyl-tRNA(Glu): step 1/2. Catalyzes the NADPH-dependent reduction of glutamyl-tRNA(Glu) to glutamate 1-semialdehyde (GSA). The sequence is that of Glutamyl-tRNA reductase from Mycobacterium tuberculosis (strain ATCC 25177 / H37Ra).